The chain runs to 64 residues: Conotoxin Pu3.5 (64 aa).

An N-terminal signal peptide occupies residues 1 to 16 (LGVLLTICLLLFPLTA). The propeptide occupies 17 to 49 (VPLDGDQPADQPAGRMQDDISSEQHPFFDPVKR). Intrachain disulfides connect Cys-50–Cys-63, Cys-51–Cys-58, and Cys-54–Cys-62.

It belongs to the conotoxin M superfamily. In terms of tissue distribution, expressed by the venom duct.

The protein localises to the secreted. This Conus pulicarius (Flea-bitten cone) protein is Conotoxin Pu3.5.